The chain runs to 157 residues: uncharacterized protein (157 aa).

One can recognise an N-acetyltransferase domain in the interval 9–154 (LLINYKTLDE…ETNLNAVTNE (146 aa)).

This is an uncharacterized protein from Bacillus cereus (strain B4264).